A 1052-amino-acid chain; its full sequence is Germline survival defective-1 (1052 aa).

Positions 1–25 (MRCLISYLFHSFLIFLKFIRSDVTA) are cleaved as a signal peptide. Disordered stretches follow at residues 41-320 (LMKS…DPKN), 478-543 (VNGI…QSVP), 667-689 (PSSQ…EEFE), 933-965 (KQTL…NSYA), and 1033-1052 (SNNT…NSNF). A compositionally biased stretch (low complexity) spans 67–145 (ATATAAATTQ…SSTSSTSQQT (79 aa)). A compositionally biased stretch (polar residues) spans 163-172 (TSNTANSQSG). Basic and acidic residues predominate over residues 178–190 (TNKDRPKEKEKNT). Residues 244–279 (NAKSSGFLSNSSLSSAGQISASSAPPVSTTPTAIPI) show a composition bias toward low complexity. Basic and acidic residues predominate over residues 305 to 320 (KRDEEPMPYKSTDPKN). Residues 424-732 (QHPPGLPPLL…QIEKNDNLFS (309 aa)) are gld-4 binding. The segment covering 480 to 514 (GISNNIPSDRQQLDSKPNTARGSSGNINQSNTTSP) has biased composition (polar residues). Residues 674 to 689 (DENDTDSDHESEEEFE) are compositionally biased toward acidic residues. A gld-3 binding region spans residues 892-1052 (PIELPVNMQP…SGGGNQNSNF (161 aa)). Positions 950-963 (EGSQQNGGTSSSNS) are enriched in low complexity. The span at 1038 to 1052 (GVNGNSGGGNQNSNF) shows a compositional bias: gly residues.

Isoform C interacts (via C-terminus) with gld-3 isoform A (via C-terminus) in an RNA-independent manner. Isoform C interacts with gld-4. In terms of tissue distribution, expressed in the germline (at protein level). In the early embryo is expressed in all cells, then becomes gradually restricted to the germ cell lineage and enriches in P granules (at protein level). In adult hermaphrodites, is expressed in the mitotic region, accumulates during early stages of meiotic prophase I and is slightly less abundant in maturing oocytes (at protein level).

It is found in the cytoplasm. It localises to the cytoplasmic granule. In terms of biological role, required maternally for germline survival by forming a maternal complex with gld-3. During hermaphrodite development forms a complex with gld-3 which promotes the sperm/oocyte switch freeing the translational repressor fbf to turn off sperm promoting factors. Required for proper oocyte differentiation and oogenic meiotic arrest. Stimulates the enzymatic activity of gld-4 and together they prevent gld-1 mRNA degradation. This is Germline survival defective-1 from Caenorhabditis elegans.